We begin with the raw amino-acid sequence, 290 residues long: Glycine--tRNA ligase alpha subunit (290 aa).

The protein belongs to the class-II aminoacyl-tRNA synthetase family. Tetramer of two alpha and two beta subunits.

The protein resides in the cytoplasm. It carries out the reaction tRNA(Gly) + glycine + ATP = glycyl-tRNA(Gly) + AMP + diphosphate. This chain is Glycine--tRNA ligase alpha subunit, found in Desulfotalea psychrophila (strain LSv54 / DSM 12343).